The chain runs to 854 residues: Protein mono-ADP-ribosyltransferase PARP8 (854 aa).

Disordered stretches follow at residues 113–138 and 291–310; these read NGEESRQNSTVEEDSEGDNDSEEFYY and SYPPPGCGKSKSKLKSEQDG. Over residues 123-135 the composition is skewed to acidic residues; that stretch reads VEEDSEGDNDSEE. ADP-ribosylcysteine is present on residues C332, C367, C376, and C395. The PARP catalytic domain occupies 617 to 844; that stretch reads EMTQAPYLEI…QEGGIHKEIL (228 aa). The tract at residues 750–777 is disordered; the sequence is QKVSAKDEPASSSKSSNTSQSQKKGQQS. The segment covering 760 to 777 has biased composition (low complexity); it reads SSSKSSNTSQSQKKGQQS.

The protein belongs to the ARTD/PARP family. Auto-mono-ADP-ribosylated.

It catalyses the reaction L-cysteinyl-[protein] + NAD(+) = S-(ADP-D-ribosyl)-L-cysteinyl-[protein] + nicotinamide + H(+). In terms of biological role, mono-ADP-ribosyltransferase that mediates mono-ADP-ribosylation of target proteins. This chain is Protein mono-ADP-ribosyltransferase PARP8, found in Homo sapiens (Human).